A 337-amino-acid chain; its full sequence is RNA 3'-terminal phosphate cyclase (337 aa).

Residues Gln-101 and 282-285 contribute to the ATP site; that span reads HMSD. The active-site Tele-AMP-histidine intermediate is His-306.

Belongs to the RNA 3'-terminal cyclase family. Type 1 subfamily.

The protein localises to the cytoplasm. It catalyses the reaction a 3'-end 3'-phospho-ribonucleotide-RNA + ATP = a 3'-end 2',3'-cyclophospho-ribonucleotide-RNA + AMP + diphosphate. Catalyzes the conversion of 3'-phosphate to a 2',3'-cyclic phosphodiester at the end of RNA. The mechanism of action of the enzyme occurs in 3 steps: (A) adenylation of the enzyme by ATP; (B) transfer of adenylate to an RNA-N3'P to produce RNA-N3'PP5'A; (C) and attack of the adjacent 2'-hydroxyl on the 3'-phosphorus in the diester linkage to produce the cyclic end product. The biological role of this enzyme is unknown but it is likely to function in some aspects of cellular RNA processing. The sequence is that of RNA 3'-terminal phosphate cyclase from Saccharolobus islandicus (strain L.S.2.15 / Lassen #1) (Sulfolobus islandicus).